A 109-amino-acid polypeptide reads, in one-letter code: Cell division protein FtsL (109 aa).

At 1–3 the chain is on the cytoplasmic side; the sequence is MSR. Residues 4–21 form a helical membrane-spanning segment; the sequence is LNIFLLIIVMGCALSVVN. At 22 to 109 the chain is on the periplasmic side; sequence STNQQRQIFI…ASAAPTGGAR (88 aa).

Belongs to the FtsL family. As to quaternary structure, part of a complex composed of FtsB, FtsL and FtsQ.

The protein resides in the cell inner membrane. Essential cell division protein. May link together the upstream cell division proteins, which are predominantly cytoplasmic, with the downstream cell division proteins, which are predominantly periplasmic. The polypeptide is Cell division protein FtsL (Burkholderia pseudomallei (strain K96243)).